Consider the following 307-residue polypeptide: N-acetylmuramic acid 6-phosphate etherase (307 aa).

The SIS domain occupies I57–K220. E85 (proton donor) is an active-site residue. The active site involves E116.

This sequence belongs to the GCKR-like family. MurNAc-6-P etherase subfamily. Homodimer.

It catalyses the reaction N-acetyl-D-muramate 6-phosphate + H2O = N-acetyl-D-glucosamine 6-phosphate + (R)-lactate. It participates in amino-sugar metabolism; N-acetylmuramate degradation. Functionally, specifically catalyzes the cleavage of the D-lactyl ether substituent of MurNAc 6-phosphate, producing GlcNAc 6-phosphate and D-lactate. The protein is N-acetylmuramic acid 6-phosphate etherase of Alkaliphilus metalliredigens (strain QYMF).